The chain runs to 273 residues: Methylthioribulose-1-phosphate dehydratase (273 aa).

The tract at residues 1-27 is disordered; it reads MCPTCPPSAASASSENNNTDNNDHLVL. Cys-114 lines the substrate pocket. Zn(2+) is bound by residues His-132 and His-134. Residue Glu-168 is the Proton donor/acceptor of the active site. His-225 provides a ligand contact to Zn(2+).

The protein belongs to the aldolase class II family. MtnB subfamily. It depends on Zn(2+) as a cofactor.

It is found in the cytoplasm. It catalyses the reaction 5-(methylsulfanyl)-D-ribulose 1-phosphate = 5-methylsulfanyl-2,3-dioxopentyl phosphate + H2O. Its pathway is amino-acid biosynthesis; L-methionine biosynthesis via salvage pathway; L-methionine from S-methyl-5-thio-alpha-D-ribose 1-phosphate: step 2/6. Its function is as follows. Catalyzes the dehydration of methylthioribulose-1-phosphate (MTRu-1-P) into 2,3-diketo-5-methylthiopentyl-1-phosphate (DK-MTP-1-P). This Sordaria macrospora (strain ATCC MYA-333 / DSM 997 / K(L3346) / K-hell) protein is Methylthioribulose-1-phosphate dehydratase.